The primary structure comprises 515 residues: Microtubule-associated protein 70-4 (515 aa).

2 coiled-coil regions span residues 26–106 and 136–351; these read VVDE…ALSA and LESD…NTSA. Positions 208-410 are required for targeting to microtubules; sequence LLEKSNRQQV…KQPGSETEAA (203 aa). The segment at 340–515 is disordered; it reads DDMRNESSNT…VKSTKDSCEI (176 aa). The segment covering 345 to 362 has biased composition (polar residues); sequence ESSNTSASNKDNATSKQA. A compositionally biased stretch (low complexity) spans 364-374; sequence PKRSSSQPRRP. Basic and acidic residues-rich tracts occupy residues 409-425, 450-461, and 484-515; these read AAEK…DSPR, KVADDAGKENKE, and SEHE…SCEI.

It belongs to the MAP70 family.

The protein resides in the cytoplasm. Its subcellular location is the cytoskeleton. Its function is as follows. Plant-specific protein that interact with microtubules. This chain is Microtubule-associated protein 70-4 (MAP70.4), found in Oryza sativa subsp. japonica (Rice).